The primary structure comprises 725 residues: Manganese-exporting P-type ATPase (725 aa).

The 68-residue stretch at 25–92 (GRMRIQIEWV…AISGAAHVAA (68 aa)) folds into the HMA domain. Transmembrane regions (helical) follow at residues 101 to 119 (HSSD…GAAA), 142 to 160 (LVAS…RGAL), 165 to 179 (TGTD…IASL), 188 to 202 (LAVL…YLQD), 335 to 359 (VGEN…AITK), and 365 to 383 (MTVL…TPTA). Asp416 acts as the 4-aspartylphosphate intermediate in catalysis. 3 residues coordinate Mg(2+): Asp416, Thr418, and Asp618. Helical transmembrane passes span 669 to 688 (AVEV…AAGL) and 698 to 717 (PVLA…ANSS).

Belongs to the cation transport ATPase (P-type) (TC 3.A.3) family. Type IB subfamily.

The protein localises to the cell membrane. The enzyme catalyses Mn(2+)(in) + ATP + H2O = Mn(2+)(out) + ADP + phosphate + H(+). In terms of biological role, high affinity, slow turnover Mn(2+) transporting ATPase. This Mycobacterium leprae (strain TN) protein is Manganese-exporting P-type ATPase (ctpC).